The following is a 356-amino-acid chain: Methylthioribose-1-phosphate isomerase (356 aa).

Asp234 acts as the Proton donor in catalysis.

It belongs to the eIF-2B alpha/beta/delta subunits family. MtnA subfamily.

The protein localises to the cytoplasm. The protein resides in the nucleus. The catalysed reaction is 5-(methylsulfanyl)-alpha-D-ribose 1-phosphate = 5-(methylsulfanyl)-D-ribulose 1-phosphate. The protein operates within amino-acid biosynthesis; L-methionine biosynthesis via salvage pathway; L-methionine from S-methyl-5-thio-alpha-D-ribose 1-phosphate: step 1/6. Catalyzes the interconversion of methylthioribose-1-phosphate (MTR-1-P) into methylthioribulose-1-phosphate (MTRu-1-P). The protein is Methylthioribose-1-phosphate isomerase (mri1) of Schizosaccharomyces japonicus (strain yFS275 / FY16936) (Fission yeast).